The chain runs to 128 residues: Azurin (128 aa).

One can recognise a Plastocyanin-like domain in the interval 1-128 (AECKVDVDST…SMMKGAVVLK (128 aa)). An intrachain disulfide couples cysteine 3 to cysteine 26. Residues histidine 46, cysteine 112, histidine 117, and methionine 121 each coordinate Cu cation.

It is found in the periplasm. Its function is as follows. Transfers electrons from cytochrome c551 to cytochrome oxidase. In Pseudomonas chlororaphis (Pseudomonas aureofaciens), this protein is Azurin.